The sequence spans 358 residues: MVDGTLLLLLSEALALTQTWAGSHSLKYFHTSVSRPGRGEPRFISVGYVDDTQFVRFDNDAASPRMVPRAPWMEQEGSEYWDRETRSARDTAQIFRVNLRTLRGYYNQSEAGSHTLQWMHGCELGPDGRFLRGYEQFAYDGKDYLTLNEDLRSWTAVDTAAQISEQKSNDASEAEHQRAYLEDTCVEWLHKYLEKGKETLLHLEPPKTHVTHHPISDHEATLRCWALGFYPAEITLTWQQDGEGHTQDTELVETRPAGDGTFQKWAAVVVPSGEEQRYTCHVQHEGLPEPVTLRWKPASQPTIPIVGIIAGLVLLGSVVSGAVVAAVIWRKKSSGGKGGSYSKAEWSDSAQGSESHSL.

Positions 1–21 (MVDGTLLLLLSEALALTQTWA) are cleaved as a signal peptide. Residues 22 to 111 (GSHSLKYFHT…LRGYYNQSEA (90 aa)) form an alpha-1 region. The Extracellular portion of the chain corresponds to 22-305 (GSHSLKYFHT…KPASQPTIPI (284 aa)). A peptide antigen is bound by residues Y28, E84, S87, N98, and Y105. An N-linked (GlcNAc...) asparagine glycan is attached at N107. The tract at residues 112-203 (GSHTLQWMHG…EKGKETLLHL (92 aa)) is alpha-2. Cysteines 122 and 185 form a disulfide. Residues S164, K167, Q177, Y180, and Y192 each coordinate a peptide antigen. Residues 204-295 (EPPKTHVTHH…GLPEPVTLRW (92 aa)) are alpha-3. The Ig-like C1-type domain occupies 206-294 (PKTHVTHHPI…EGLPEPVTLR (89 aa)). C224 and C280 are oxidised to a cystine. The interval 296-305 (KPASQPTIPI) is connecting peptide. The chain crosses the membrane as a helical span at residues 306-329 (VGIIAGLVLLGSVVSGAVVAAVIW). Residues 330–358 (RKKSSGGKGGSYSKAEWSDSAQGSESHSL) lie on the Cytoplasmic side of the membrane. The interval 333 to 358 (SSGGKGGSYSKAEWSDSAQGSESHSL) is disordered. The span at 348 to 358 (DSAQGSESHSL) shows a compositional bias: polar residues. A Phosphoserine modification is found at S353.

It belongs to the MHC class I family. As to quaternary structure, forms a heterotrimer with B2M and a self- or a pathogen-derived peptide (peptide-bound HLA-E-B2M). Similarly to MHC class Ia assembly, HLA-E-B2M heterodimer interacts with components of the antigen processing machinery TAPBP and TAP1-TAP2 complex; this interaction is required for peptide loading and translocation to the cell surface. Interacts with CALCR; this interaction is required for appropriate folding. The optimum binding peptide is a nonamer (VL9) that is primarily derived from amino-acid residues 3-11 of the signal sequences of most HLA-A, -B, -C and -G molecules. The VL9 peptide anchors to five main sites in the peptide-binding groove of HLA-E. Peptide-bound HLA-E-B2M complex interacts with KLRD1-KLRC1 receptor on NK cells. Binds with lower affinity to activating KLRD1-KLRC2. The common subunit KLRC1 plays a prominent role in directly interacting with HLA-E. Peptide-bound HLA-E-B2M interacts with the alpha-beta TCR on unconventional CD8+ T cells. Peptide-free HLA-E interacts with HLA-F-B2M complex; this interaction may regulate the intracellular trafficking and the stability of peptide-free MHC class I open conformers (OCs). In terms of processing, N-glycosylated. The soluble form (sHLA-E) can be partly produced by proteolytic cleavage at the cell surface (shedding) by a matrix metalloproteinase. Alternative splicing is also suggested as a mechanism for generation of sHLA-E, although it remains to be proved. In terms of tissue distribution, expressed in secretory endometrial cells during pregnancy (at protein level). The expression in nonlymphoid tissues is restricted to endothelial cells from all types of vessels, including arteries, veins, capillaries, and lymphatics (at protein level). In lymphoid organs, it is mainly expressed in endothelial venules, B and T cells, monocytes, macrophages, NK cells and megakaryocytes (at protein level).

It localises to the cell membrane. The protein localises to the golgi apparatus membrane. It is found in the secreted. Non-classical major histocompatibility class Ib molecule involved in immune self-nonself discrimination. In complex with B2M/beta-2-microglobulin binds nonamer self-peptides derived from the signal sequence of classical MHC class Ia molecules (VL9 peptides - VMAPRT[V/L][L/V/I/F]L). Peptide-bound HLA-E-B2M heterotrimeric complex primarily functions as a ligand for natural killer (NK) cell inhibitory receptor KLRD1-KLRC1, enabling NK cells to monitor the expression of other MHC class I molecules in healthy cells and to tolerate self. Upon cellular stress, preferentially binds signal sequence-derived peptides from stress-induced chaperones and is no longer recognized by NK cell inhibitory receptor KLRD1-KLRC1, resulting in impaired protection from NK cells. Binds signal sequence-derived peptides from non-classical MHC class Ib HLA-G molecules and acts as a ligand for NK cell activating receptor KLRD1-KLRC2, likely playing a role in the generation and effector functions of adaptive NK cells and in maternal-fetal tolerance during pregnancy. Besides self-peptides, can also bind and present pathogen-derived peptides conformationally similar to VL9 peptides to alpha-beta T cell receptor (TCR) on unconventional CD8-positive cytotoxic T cells, ultimately triggering antimicrobial immune response. Presents HIV gag peptides (immunodominant KAFSPEVIPMF and subdominant KALGPAATL epitopes) predominantly to CD8-positive T cell clones expressing a TRAV17-containing TCR, triggering HLA-E-restricted T cell responses. Presents mycobacterial peptides to HLA-E-restricted CD8-positive T cells eliciting both cytotoxic and immunoregulatory functions. Its function is as follows. (Microbial infection) Viruses like human cytomegalovirus have evolved an escape mechanism whereby virus-induced down-regulation of host MHC class I molecules is coupled to the binding of viral peptides to HLA-E, restoring HLA-E expression and inducing HLA-E-dependent NK cell immune tolerance to infected cells. Functionally, (Microbial infection) May bind HIV-1 gag/Capsid protein p24-derived peptide (AISPRTLNA) on infected cells and may inhibit NK cell cytotoxicity, a mechanism that allows HIV-1 to escape immune recognition. In terms of biological role, (Microbial infection) Upon SARS-CoV-2 infection, may contribute to functional exhaustion of cytotoxic NK cells and CD8-positive T cells. Binds SARS-CoV-2 S/Spike protein S1-derived peptide (LQPRTFLL) expressed on the surface of lung epithelial cells, inducing NK cell exhaustion and dampening of antiviral immune surveillance. The sequence is that of HLA class I histocompatibility antigen, alpha chain E from Homo sapiens (Human).